Consider the following 256-residue polypeptide: Thiazole synthase (256 aa).

Lys-96 acts as the Schiff-base intermediate with DXP in catalysis. 1-deoxy-D-xylulose 5-phosphate-binding positions include Gly-157, 183 to 184 (AG), and 205 to 206 (NT).

This sequence belongs to the ThiG family. In terms of assembly, homotetramer. Forms heterodimers with either ThiH or ThiS.

The protein resides in the cytoplasm. It catalyses the reaction [ThiS sulfur-carrier protein]-C-terminal-Gly-aminoethanethioate + 2-iminoacetate + 1-deoxy-D-xylulose 5-phosphate = [ThiS sulfur-carrier protein]-C-terminal Gly-Gly + 2-[(2R,5Z)-2-carboxy-4-methylthiazol-5(2H)-ylidene]ethyl phosphate + 2 H2O + H(+). It participates in cofactor biosynthesis; thiamine diphosphate biosynthesis. Its function is as follows. Catalyzes the rearrangement of 1-deoxy-D-xylulose 5-phosphate (DXP) to produce the thiazole phosphate moiety of thiamine. Sulfur is provided by the thiocarboxylate moiety of the carrier protein ThiS. In vitro, sulfur can be provided by H(2)S. This Clostridium beijerinckii (strain ATCC 51743 / NCIMB 8052) (Clostridium acetobutylicum) protein is Thiazole synthase.